Reading from the N-terminus, the 215-residue chain is Small ribosomal subunit protein uS7 (215 aa).

The protein belongs to the universal ribosomal protein uS7 family. Part of the 30S ribosomal subunit.

Functionally, one of the primary rRNA binding proteins, it binds directly to 16S rRNA where it nucleates assembly of the head domain of the 30S subunit. Is located at the subunit interface close to the decoding center. In Thermococcus gammatolerans (strain DSM 15229 / JCM 11827 / EJ3), this protein is Small ribosomal subunit protein uS7.